Here is a 313-residue protein sequence, read N- to C-terminus: Aspartate carbamoyltransferase catalytic subunit (313 aa).

2 residues coordinate carbamoyl phosphate: R58 and T59. L-aspartate is bound at residue K86. Carbamoyl phosphate is bound by residues R108, H136, and Q139. R169 and R223 together coordinate L-aspartate. Residues G264 and P265 each coordinate carbamoyl phosphate.

It belongs to the aspartate/ornithine carbamoyltransferase superfamily. ATCase family. As to quaternary structure, heterododecamer (2C3:3R2) of six catalytic PyrB chains organized as two trimers (C3), and six regulatory PyrI chains organized as three dimers (R2).

It carries out the reaction carbamoyl phosphate + L-aspartate = N-carbamoyl-L-aspartate + phosphate + H(+). Its pathway is pyrimidine metabolism; UMP biosynthesis via de novo pathway; (S)-dihydroorotate from bicarbonate: step 2/3. Catalyzes the condensation of carbamoyl phosphate and aspartate to form carbamoyl aspartate and inorganic phosphate, the committed step in the de novo pyrimidine nucleotide biosynthesis pathway. The sequence is that of Aspartate carbamoyltransferase catalytic subunit from Ruminiclostridium cellulolyticum (strain ATCC 35319 / DSM 5812 / JCM 6584 / H10) (Clostridium cellulolyticum).